The primary structure comprises 1412 residues: MTTKRSLFVRLVPCRCLRGEEETVTTLDYSHCSLEQVPKEIFTFEKTLEELYLDANQIEELPKQLFNCQSLHKLSLPDNDLTTLPASIANLINLRELDVSKNGIQEFPENIKNCKVLTIVEASVNPISKLPDGFSQLLNLTQLYLNDAFLEFLPANFGRLTKLQILELRENQLKMLPKTMNRLTQLERLDLGSNEFTEVPEVLEQLSGLKEFWMDANRLTFIPGFIGSLKQLTYLDVSKNNIEMVEEGISTCENLQDLLLSSNSLQQLPETIGSLKNITTLKIDENQLMYLPDSIGGLISVEELDCSFNEVEALPSSIGQLTNLRTFAADHNYLQQLPPEIGSWKNITVLFLHSNKLETLPEEMGDMQKLKVINLSDNRLKNLPFSFTKLQQLTAMWLSDNQSKPLIPLQKETDSETQKMVLTNYMFPQQPRTEDVMFISDNESFNPSLWEEQRKQRAQVAFECDEDKDEREAPPREGNLKRYPTPYPDELKNMVKTVQTIVHRLKDEETNEDSGRDLKPHEDQQDINKDVGVKTSESTTTVKSKVDEREKYMIGNSVQKISEPEAEISPGSLPVTANMKASENLKHIVNHDDVFEESEELSSDEEMKMAEMRPPLIETSINQPKVVALSNNKKDDTKETDSLSDEVTHNSNQNNSNCSSPSRMSDSVSLNTDSSQDTSLCSPVKQTHIDINSKIRQEDENFNSLLQNGDILNSSTEEKFKAHDKKDFNLPEYDLNVEERLVLIEKSVDSTATADDTHKLDHINMNLNKLITNDTFQPEIMERSKTQDIVLGTSFLSINSKEETEHLENGNKYPNLESVNKVNGHSEETSQSPNRTEPHDSDCSVDLGISKSTEDLSPQKSGPVGSVVKSHSITNMEIGGLKIYDILSDNGPQQPSTTVKITSAVDGKNIVRSKSATLLYDQPLQVFTGSSSSSDLISGTKAIFKFDSNHNPEEPNIIRGPTSGPQSAPQIYGPPQYNIQYSSSAAVKDTLWHSKQNPQIDHASFPPQLLPRSESTENQSYAKHSANMNFSNHNNVRANTAYHLHQRLGPARHGEMWAISPNDRLIPAVTRSTIQRQSSVSSTASVNLGDPGSTRRAQIPEGDYLSYREFHSAGRTPPMMPGSQRPLSARTYSIDGPNASRPQSARPSINEIPERTMSVSDFNYSRTSPSKRPNARVGSEHSLLDPPGKSKVPRDWREQVLRHIEAKKLEKKHPQTSSSGDPCQDGIFISGQQNYSSATLSHKDVPPDSLMKMPLSNGQMGQPLRPQANYSQIHHPPQASVARHPSREQLIDYLMLKVAHQPPYTQPHCSPRQGHELAKQEIRVRVEKDPELGFSISGGVGGRGNPFRPDDDGIFVTRVQPEGPASKLLQPGDKIIQANGYSFINIEHGQAVSLLKTFQNTVELIIVREVSS.

17 LRR repeats span residues 23 to 44 (TVTT…IFTF), 47 to 68 (TLEE…LFNC), 70 to 91 (SLHK…IANL), 93 to 114 (NLRE…IKNC), 116 to 137 (VLTI…FSQL), 139 to 161 (NLTQ…GRLT), 162 to 183 (KLQI…MNRL), 185 to 206 (QLER…LEQL), 208 to 229 (GLKE…IGSL), 231 to 252 (QLTY…ISTC), 254 to 275 (NLQD…IGSL), 277 to 298 (NITT…IGGL), 300 to 321 (SVEE…IGQL), 323 to 344 (NLRT…IGSW), 346 to 367 (NITV…MGDM), 369 to 391 (KLKV…TKLQ), and 392 to 413 (QLTA…QKET). Phosphoserine is present on residues Ser-440 and Ser-444. Disordered regions lie at residues 464-489 (CDED…PYPD) and 506-542 (KDEE…TTTV). Residues 470 to 480 (EREAPPREGNL) show a composition bias toward basic and acidic residues. Tyr-483 bears the Phosphotyrosine mark. Residue Thr-485 is modified to Phosphothreonine. A compositionally biased stretch (basic and acidic residues) spans 506–532 (KDEETNEDSGRDLKPHEDQQDINKDVG). The segment covering 533 to 542 (VKTSESTTTV) has biased composition (low complexity). Phosphoserine is present on residues Ser-569, Ser-598, Ser-602, Ser-603, and Ser-620. The interval 615–681 (PLIETSINQP…TDSSQDTSLC (67 aa)) is disordered. Over residues 632 to 641 (NKKDDTKETD) the composition is skewed to basic and acidic residues. Low complexity predominate over residues 650 to 662 (NSNQNNSNCSSPS). Polar residues predominate over residues 663–681 (RMSDSVSLNTDSSQDTSLC). Ser-715 bears the Phosphoserine mark. Residues 803 to 867 (ETEHLENGNK…PQKSGPVGSV (65 aa)) form a disordered region. Residues 817–835 (ESVNKVNGHSEETSQSPNR) are compositionally biased toward polar residues. Ser-852, Ser-857, and Ser-872 each carry phosphoserine. The residue at position 917 (Thr-917) is a Phosphothreonine. Residue Tyr-920 is modified to Phosphotyrosine. Residue Ser-931 is modified to Phosphoserine. A Phosphotyrosine modification is found at Tyr-972. Disordered stretches follow at residues 997–1021 (NPQI…NQSY) and 1075–1192 (QRQS…KSKV). Polar residues predominate over residues 1075 to 1086 (QRQSSVSSTASV). Phosphotyrosine is present on Tyr-1104. Positions 1157 to 1171 (MSVSDFNYSRTSPSK) are enriched in polar residues. Phosphoserine occurs at positions 1158, 1179, and 1286. One can recognise a PDZ domain in the interval 1321–1410 (EIRVRVEKDP…TVELIIVREV (90 aa)).

This sequence belongs to the LAP (LRR and PDZ) protein family. Interacts with ERBB2, BPAG1 and ITGB4. May favor the localization of ERBB2, by restricting its presence to the basolateral membrane of epithelial cells. Also found to interact with ARVCF and delta catenin. Interacts (via C-terminus) with DST Isoform 3 (via N-terminus). Interacts with NOD2 (via CARD domain). Highly expressed in brain, heart, kidney, muscle and stomach, followed by liver, spleen and intestine.

The protein localises to the cell junction. It localises to the hemidesmosome. The protein resides in the nucleus membrane. It is found in the basolateral cell membrane. In terms of biological role, acts as an adapter for the receptor ERBB2, in epithelia. By binding the unphosphorylated 'Tyr-1248' of receptor ERBB2, it may contribute to stabilize this unphosphorylated state. Inhibits NOD2-dependent NF-kappa-B signaling and pro-inflammatory cytokine secretion. This is Erbin from Homo sapiens (Human).